Reading from the N-terminus, the 141-residue chain is uncharacterized protein (141 aa).

This is an uncharacterized protein from Thermoproteus tenax (TTV1).